The sequence spans 214 residues: Probable transaldolase (214 aa).

Lysine 83 serves as the catalytic Schiff-base intermediate with substrate.

This sequence belongs to the transaldolase family. Type 3B subfamily.

Its subcellular location is the cytoplasm. The catalysed reaction is D-sedoheptulose 7-phosphate + D-glyceraldehyde 3-phosphate = D-erythrose 4-phosphate + beta-D-fructose 6-phosphate. Its pathway is carbohydrate degradation; pentose phosphate pathway; D-glyceraldehyde 3-phosphate and beta-D-fructose 6-phosphate from D-ribose 5-phosphate and D-xylulose 5-phosphate (non-oxidative stage): step 2/3. In terms of biological role, transaldolase is important for the balance of metabolites in the pentose-phosphate pathway. The chain is Probable transaldolase from Leptospira borgpetersenii serovar Hardjo-bovis (strain JB197).